The primary structure comprises 423 residues: MSYVIDRRLNGKNKSTVNRQRFLRRYREHIKKAVEEAVSRRSITDMEHGEQISIPGRDIDEPVLHHGRGGKQTIVHPGNKEFTAGERIPRPQGGGGGRGSGKASNSGEGMDEFVFQITQEEFLDFMFEDLELPNLVKRHLTGADTFKTVRAGISNEGNPSRINIIRTLRSAHARRIALSGSSRAKLREAKAELLRLRTEEPDNFSDIQEIEAEIERLSARIHRVPFLDTFDLKYNLLTKQPNPSSKAVMFCLMDVSGSMTQATKDIAKRFFILLYLFLKRNYDKIEVVFIRHHTSAKEVDEEEFFYSRETGGTIVSSALKLMQEIMAERYPINEWNIYAAQASDGDNWNDDSPVCRDILINQIMPFVQYFTYVEITPREHQALWFEYEQVAEAFDESFAQQQLVSAADIYPVFRELFQRRLVS.

A disordered region spans residues 65–108; the sequence is HHGRGGKQTIVHPGNKEFTAGERIPRPQGGGGGRGSGKASNSGE.

It belongs to the UPF0229 family.

The protein is UPF0229 protein Pmen_4018 of Ectopseudomonas mendocina (strain ymp) (Pseudomonas mendocina).